An 80-amino-acid chain; its full sequence is Pre-core protein X (80 aa).

Positions 2 to 32 (ALTCRLRFPVPGFRGRMHRRRGMAGHGLTGG) are excised as a propeptide. The interval 18 to 45 (MHRRRGMAGHGLTGGMRRAHHRRRRASH) is disordered. Residues 34 to 45 (RRAHHRRRRASH) show a composition bias toward basic residues. The propeptide occupies 52–80 (ILPLLIPLIAAAIGAVPGIASVALQAQRH).

This sequence belongs to the adenoviridae core protein X family. Interacts with the core-capsid bridging protein; this interaction bridges the virus core to the capsid. Cleaved by the viral protease during virion maturation to form the mature protein.

The protein localises to the host nucleus. It localises to the host nucleolus. Its subcellular location is the virion. Interacts with the viral DNA and aids in tightly condensing it within the capsid. Cleavage of pre-core protein X may serve to partially relax this structure within the mature virion prior to its entry into the nucleus. In Human adenovirus C serotype 2 (HAdV-2), this protein is Pre-core protein X.